Reading from the N-terminus, the 346-residue chain is MGFLSKLIAKLKPKKSVAKQLKEEVEKQSLFQTNNKTYYQGLKKSATTFAKTINELSKRYVNVDEQFKENLFEGLVLLDVGYHAANKICDAIIEQIKLNRITDFQLIKELIIDQIIVYYIQDKLFDTDLIVKPNFTNVYLFVGVNGVGKTTTLAKIADFFIKQNKRVLLVAGDTFRAGAIEQLNQWAKLLNCDIVLPNPKEQTPAVIFRGVKKGIDDKYDFVLCDTSGRLQNKLNLMNELQKIYQIIQKVSGSEPSETLLVLDGTVGQTGLSQAKVFNEFSKLTGIVLTKMDGSAKGGIILAIKDMFNLPVKLIGFGEKTSDLAIFDLEKYVLGLLNNLNLDNKEN.

GTP is bound by residues 143–150 (GVNGVGKT), 225–229 (DTSGR), and 289–292 (TKMD).

The protein belongs to the GTP-binding SRP family. FtsY subfamily. As to quaternary structure, part of the signal recognition particle protein translocation system, which is composed of SRP and FtsY.

The protein localises to the cell membrane. Its subcellular location is the cytoplasm. It catalyses the reaction GTP + H2O = GDP + phosphate + H(+). Functionally, involved in targeting and insertion of nascent membrane proteins into the cytoplasmic membrane. Acts as a receptor for the complex formed by the signal recognition particle (SRP) and the ribosome-nascent chain (RNC). This chain is Signal recognition particle receptor FtsY, found in Mycoplasma genitalium (strain ATCC 33530 / DSM 19775 / NCTC 10195 / G37) (Mycoplasmoides genitalium).